Here is a 347-residue protein sequence, read N- to C-terminus: NADH-ubiquinone oxidoreductase chain 2 (347 aa).

A run of 10 helical transmembrane segments spans residues 3 to 23, 25 to 45, 59 to 79, 93 to 115, 150 to 170, 178 to 198, 200 to 220, 240 to 260, 274 to 294, and 326 to 346; these read PLALSLILTTLLAGTLITMMS, HWLTAWMGLEMNMLTMIPILM, YFMTQATASMMLMMALTINLM, VASNVALMALMTKLGSAPFHFWV, NTNLIYLSGLLSILIGGWGGL, ILAYSSISHMGWMLIILPFNP, LTLLNLAIYILLTLSIFMILA, MTIMLMTTLLSLGGLPPLSGF, NSIIMPLTMAIMTLLNMYFYM, and LPTLITLSNMLLPLTPMISML.

The protein belongs to the complex I subunit 2 family. Core subunit of respiratory chain NADH dehydrogenase (Complex I) which is composed of 45 different subunits. Interacts with TMEM242.

The protein localises to the mitochondrion inner membrane. The enzyme catalyses a ubiquinone + NADH + 5 H(+)(in) = a ubiquinol + NAD(+) + 4 H(+)(out). Functionally, core subunit of the mitochondrial membrane respiratory chain NADH dehydrogenase (Complex I) which catalyzes electron transfer from NADH through the respiratory chain, using ubiquinone as an electron acceptor. Essential for the catalytic activity and assembly of complex I. The polypeptide is NADH-ubiquinone oxidoreductase chain 2 (Mammuthus primigenius (Siberian woolly mammoth)).